Consider the following 247-residue polypeptide: Probable transcriptional regulatory protein LAF_0541 (247 aa).

Residues 1 to 22 form a disordered region; the sequence is MSGHSKWHNIQGRKNAQDAKRG.

The protein belongs to the TACO1 family.

Its subcellular location is the cytoplasm. This Limosilactobacillus fermentum (strain NBRC 3956 / LMG 18251) (Lactobacillus fermentum) protein is Probable transcriptional regulatory protein LAF_0541.